Here is a 63-residue protein sequence, read N- to C-terminus: Actiflagelin (63 aa).

Cystine bridges form between C3-C24, C6-C11, C17-C39, C43-C55, and C56-C61. P63 carries the proline amide modification.

Contains 5 disulfide bonds. In terms of tissue distribution, expressed by the venom gland.

The protein resides in the secreted. In terms of biological role, unknown. In vitro, this toxin activates sperm motility when tested on OF1 male mice. The chain is Actiflagelin from Walterinnesia aegyptia (Desert black snake).